A 56-amino-acid polypeptide reads, in one-letter code: Large ribosomal subunit protein bL33A (56 aa).

This sequence belongs to the bacterial ribosomal protein bL33 family.

The chain is Large ribosomal subunit protein bL33A from Sorangium cellulosum (strain So ce56) (Polyangium cellulosum (strain So ce56)).